The primary structure comprises 261 residues: Bidirectional sugar transporter SWEET1b (261 aa).

Over 1 to 6 the chain is Extracellular; it reads MEDLAK. A helical membrane pass occupies residues 7–27; the sequence is FLFGVSGNVIALFLFLSPVPT. The MtN3/slv 1 domain occupies 7 to 95; the sequence is FLFGVSGNVI…VVFLVFASTH (89 aa). The Cytoplasmic portion of the chain corresponds to 28–42; that stretch reads FWRIIRRKSTEDFSG. A helical transmembrane segment spans residues 43 to 63; it reads VPYNMTLINCLLSAWYGLPFV. The Extracellular segment spans residues 64 to 71; the sequence is SPNNILVS. The helical transmembrane segment at 72 to 92 threads the bilayer; that stretch reads TINGAGAVIETAYVVVFLVFA. The Cytoplasmic segment spans residues 93–101; sequence STHKTRLRT. Residues 102-122 form a helical membrane-spanning segment; that stretch reads LGLAAAVASVFAAVALVSLLA. Residues 123-129 lie on the Extracellular side of the membrane; sequence LHGQHRK. The chain crosses the membrane as a helical span at residues 130-150; the sequence is LLCGVAATVCSICMYASPLSI. Positions 133-215 constitute a MtN3/slv 2 domain; it reads GVAATVCSIC…VLYAIYRNNK (83 aa). The Cytoplasmic portion of the chain corresponds to 151–164; sequence MRLVIKTKSVEYMP. Residues 165 to 185 traverse the membrane as a helical segment; it reads FLLSLAVFLCGTSWFIYGLLG. Residues 186–189 are Extracellular-facing; sequence RDPF. Residues 190 to 210 traverse the membrane as a helical segment; it reads VTIPNGCGSFLGAVQLVLYAI. Residues 211-261 lie on the Cytoplasmic side of the membrane; the sequence is YRNNKGAGGGSGGKQAGDDDVEMAEGRNNKVADGGAAEDDSTAGGKAGTEV. The segment at 218 to 261 is disordered; the sequence is GGGSGGKQAGDDDVEMAEGRNNKVADGGAAEDDSTAGGKAGTEV.

This sequence belongs to the SWEET sugar transporter family. As to quaternary structure, forms homodimers.

It localises to the cell membrane. It catalyses the reaction D-glucose(out) = D-glucose(in). The enzyme catalyses D-galactose(in) = D-galactose(out). In terms of biological role, mediates transport of sugars across the plasma membrane. Can transport glucose and galactose, but not fructose, mannose and sucrose. The protein is Bidirectional sugar transporter SWEET1b (SWEET1B) of Oryza sativa subsp. indica (Rice).